Reading from the N-terminus, the 481-residue chain is MSIQTKFILFLSSSLFLTPYSVATEKSPQPHDGRLDEQLHLAKPNLPQKTPALLTNNNPSKLSITKEELAKHPDLIIRGLIPAVLQNNGEAVQLLLPLYQPLPKKDPFLLEWAEAIDLREKGYFSDSVKAYRHLFSQKTDLLPLRYQLAQALFLNNDNEAAKDQFQKLRAEQVSSDSVKIIEQYLSALNQRDQWKIQGGFSFLNESNINNAPKAGTKIGNWTAWEKESARGFSYFGNAEKKWSLPHNHFTKLSLEGSGKYYWDNKKYNEFNARAGVGLGYQTARFELSLMPFTEKRWYAGGSSGGNAMKQYSKNSGARLDLSNWLNEKWQISTALEYGEQRYETRKHLNGNNYLASATLLYLAKSGQYWFGGADYNRENTRDLDNAYQRKNVRLGWGQEWKAGISTRLILNYARRAYKEKDLIGIRQKNKEYASVLTIWHRNFHIWGITPKLSWSYQKVTSNHPFYEYDKNRIYVEISKTF.

The signal sequence occupies residues 1–23 (MSIQTKFILFLSSSLFLTPYSVA). The interval 25 to 192 (EKSPQPHDGR…QYLSALNQRD (168 aa)) is N-terminal domain. The segment at 193–481 (QWKIQGGFSF…RIYVEISKTF (289 aa)) is C-terminal probable beta barrel. Beta stranded transmembrane passes span 194–204 (WKIQGGFSFLN), 233–243 (SYFGNAEKKWS), 248–258 (HFTKLSLEGSG), 271–281 (NARAGVGLGYQ), 285–295 (FELSLMPFTEK), 315–325 (SGARLDLSNWL), 329–338 (WQISTALEYG), 353–363 (YLASATLLYLA), 368–377 (YWFGGADYNR), 390–400 (KNVRLGWGQEW), 405–414 (STRLILNYAR), 432–441 (YASVLTIWHR), 448–458 (ITPKLSWSYQK), and 471–481 (NRIYVEISKTF).

It belongs to the Slam family.

It localises to the cell outer membrane. In terms of biological role, required for correct export to the cell surface of some cell outer membrane lipoproteins. This chain is Surface lipoprotein assembly modifier 1, found in Haemophilus influenzae (strain ATCC 51907 / DSM 11121 / KW20 / Rd).